Consider the following 60-residue polypeptide: UPF0434 protein YE1549 (60 aa).

The protein belongs to the UPF0434 family.

This is UPF0434 protein YE1549 from Yersinia enterocolitica serotype O:8 / biotype 1B (strain NCTC 13174 / 8081).